Reading from the N-terminus, the 173-residue chain is MTHPIFMVGARGCGKTTVGHQLAQALGYDFVDTDLFMQQTTNMTVADVVAQEGWHGFRQRESLALQQVTSNRCIIATGGGMVLAEANRRFMHDKGTVIYLHADAELLAQRLEENPQDNQRPTLTGRPIAEEMADVLAAREALYRGVAHHVIDASQAPEAIVASVLKALRLSAA.

ATP is bound at residue 12–17 (GCGKTT). Mg(2+) is bound by residues Thr16 and Asp32. Substrate-binding residues include Asp34, Arg58, and Gly79. The LID domain stretch occupies residues 112 to 126 (EENPQDNQRPTLTGR). Residue Arg120 coordinates ATP. A substrate-binding site is contributed by Arg139. Gln155 lines the ATP pocket.

Belongs to the shikimate kinase family. AroL subfamily. As to quaternary structure, monomer. Mg(2+) is required as a cofactor.

It localises to the cytoplasm. It carries out the reaction shikimate + ATP = 3-phosphoshikimate + ADP + H(+). It participates in metabolic intermediate biosynthesis; chorismate biosynthesis; chorismate from D-erythrose 4-phosphate and phosphoenolpyruvate: step 5/7. Catalyzes the specific phosphorylation of the 3-hydroxyl group of shikimic acid using ATP as a cosubstrate. This chain is Shikimate kinase 2, found in Pectobacterium carotovorum subsp. carotovorum (strain PC1).